The chain runs to 615 residues: 1-deoxy-D-xylulose-5-phosphate synthase (615 aa).

Residues His72 and 111–113 (GHS) contribute to the thiamine diphosphate site. Asp142 contributes to the Mg(2+) binding site. Thiamine diphosphate-binding positions include 143–144 (GA), Asn171, Tyr278, and Glu360. Asn171 serves as a coordination point for Mg(2+).

It belongs to the transketolase family. DXPS subfamily. In terms of assembly, homodimer. Mg(2+) serves as cofactor. Thiamine diphosphate is required as a cofactor.

It catalyses the reaction D-glyceraldehyde 3-phosphate + pyruvate + H(+) = 1-deoxy-D-xylulose 5-phosphate + CO2. It participates in metabolic intermediate biosynthesis; 1-deoxy-D-xylulose 5-phosphate biosynthesis; 1-deoxy-D-xylulose 5-phosphate from D-glyceraldehyde 3-phosphate and pyruvate: step 1/1. Its function is as follows. Catalyzes the acyloin condensation reaction between C atoms 2 and 3 of pyruvate and glyceraldehyde 3-phosphate to yield 1-deoxy-D-xylulose-5-phosphate (DXP). The chain is 1-deoxy-D-xylulose-5-phosphate synthase from Campylobacter jejuni (strain RM1221).